Here is a 231-residue protein sequence, read N- to C-terminus: Phosphatidylserine decarboxylase proenzyme (231 aa).

The Schiff-base intermediate with substrate; via pyruvic acid role is filled by serine 188. Serine 188 is modified (pyruvic acid (Ser); by autocatalysis).

It belongs to the phosphatidylserine decarboxylase family. PSD-A subfamily. As to quaternary structure, heterodimer of a large membrane-associated beta subunit and a small pyruvoyl-containing alpha subunit. Requires pyruvate as cofactor. Is synthesized initially as an inactive proenzyme. Formation of the active enzyme involves a self-maturation process in which the active site pyruvoyl group is generated from an internal serine residue via an autocatalytic post-translational modification. Two non-identical subunits are generated from the proenzyme in this reaction, and the pyruvate is formed at the N-terminus of the alpha chain, which is derived from the carboxyl end of the proenzyme. The post-translation cleavage follows an unusual pathway, termed non-hydrolytic serinolysis, in which the side chain hydroxyl group of the serine supplies its oxygen atom to form the C-terminus of the beta chain, while the remainder of the serine residue undergoes an oxidative deamination to produce ammonia and the pyruvoyl prosthetic group on the alpha chain.

The protein resides in the cell membrane. It catalyses the reaction a 1,2-diacyl-sn-glycero-3-phospho-L-serine + H(+) = a 1,2-diacyl-sn-glycero-3-phosphoethanolamine + CO2. Its pathway is phospholipid metabolism; phosphatidylethanolamine biosynthesis; phosphatidylethanolamine from CDP-diacylglycerol: step 2/2. Functionally, catalyzes the formation of phosphatidylethanolamine (PtdEtn) from phosphatidylserine (PtdSer). In Rickettsia peacockii (strain Rustic), this protein is Phosphatidylserine decarboxylase proenzyme.